The chain runs to 30 residues: Cyclotide cter-O (30 aa).

Positions 1–30 (GIPCGESCVFIPCITGIAGCSCKSKVCYRN) form a cross-link, cyclopeptide (Gly-Asn). 3 cysteine pairs are disulfide-bonded: Cys4–Cys20, Cys8–Cys22, and Cys13–Cys27.

This is a cyclic peptide.

It is found in the secreted. In terms of biological role, probably participates in a plant defense mechanism. This is Cyclotide cter-O from Clitoria ternatea (Butterfly pea).